The sequence spans 333 residues: Ribosomal RNA large subunit methyltransferase F (333 aa).

Over residues 1–10 (MPQPPKRPRK) the composition is skewed to basic residues. The disordered stretch occupies residues 1–31 (MPQPPKRPRKPAPAAVKTAPAKGELHPRNRH). The span at 12–22 (APAAVKTAPAK) shows a compositional bias: low complexity.

This sequence belongs to the methyltransferase superfamily. METTL16/RlmF family.

The protein localises to the cytoplasm. The catalysed reaction is adenosine(1618) in 23S rRNA + S-adenosyl-L-methionine = N(6)-methyladenosine(1618) in 23S rRNA + S-adenosyl-L-homocysteine + H(+). Functionally, specifically methylates the adenine in position 1618 of 23S rRNA. The sequence is that of Ribosomal RNA large subunit methyltransferase F from Ectopseudomonas mendocina (strain ymp) (Pseudomonas mendocina).